Consider the following 72-residue polypeptide: Translation initiation factor IF-1 (72 aa).

Residues 1 to 72 (MARDDVIEVD…DKGRITFRYK (72 aa)) form the S1-like domain.

It belongs to the IF-1 family. In terms of assembly, component of the 30S ribosomal translation pre-initiation complex which assembles on the 30S ribosome in the order IF-2 and IF-3, IF-1 and N-formylmethionyl-tRNA(fMet); mRNA recruitment can occur at any time during PIC assembly.

Its subcellular location is the cytoplasm. One of the essential components for the initiation of protein synthesis. Stabilizes the binding of IF-2 and IF-3 on the 30S subunit to which N-formylmethionyl-tRNA(fMet) subsequently binds. Helps modulate mRNA selection, yielding the 30S pre-initiation complex (PIC). Upon addition of the 50S ribosomal subunit IF-1, IF-2 and IF-3 are released leaving the mature 70S translation initiation complex. The sequence is that of Translation initiation factor IF-1 from Helicobacter pylori (strain HPAG1).